Here is a 226-residue protein sequence, read N- to C-terminus: Fibrillarin-like rRNA/tRNA 2'-O-methyltransferase (226 aa).

S-adenosyl-L-methionine-binding positions include 85 to 86 (TT), 104 to 105 (EF), 129 to 130 (DA), and 149 to 152 (DVAQ).

The protein belongs to the methyltransferase superfamily. Fibrillarin family. As to quaternary structure, interacts with nop5. Component of box C/D small ribonucleoprotein (sRNP) particles that contain rpl7ae, FlpA and nop5, plus a guide RNA.

Involved in pre-rRNA and tRNA processing. Utilizes the methyl donor S-adenosyl-L-methionine to catalyze the site-specific 2'-hydroxyl methylation of ribose moieties in rRNA and tRNA. Site specificity is provided by a guide RNA that base pairs with the substrate. Methylation occurs at a characteristic distance from the sequence involved in base pairing with the guide RNA. This Thermococcus sibiricus (strain DSM 12597 / MM 739) protein is Fibrillarin-like rRNA/tRNA 2'-O-methyltransferase.